The chain runs to 121 residues: Large ribosomal subunit protein bL12 (121 aa).

The protein belongs to the bacterial ribosomal protein bL12 family. As to quaternary structure, homodimer. Part of the ribosomal stalk of the 50S ribosomal subunit. Forms a multimeric L10(L12)X complex, where L10 forms an elongated spine to which 2 to 4 L12 dimers bind in a sequential fashion. Binds GTP-bound translation factors.

Functionally, forms part of the ribosomal stalk which helps the ribosome interact with GTP-bound translation factors. Is thus essential for accurate translation. The polypeptide is Large ribosomal subunit protein bL12 (Mesomycoplasma hyopneumoniae (strain 7448) (Mycoplasma hyopneumoniae)).